We begin with the raw amino-acid sequence, 622 residues long: Probable Xaa-Pro aminopeptidase P (622 aa).

Positions 419, 430, 528, and 542 each coordinate Mn(2+).

This sequence belongs to the peptidase M24B family. Mn(2+) is required as a cofactor.

It carries out the reaction Release of any N-terminal amino acid, including proline, that is linked to proline, even from a dipeptide or tripeptide.. In terms of biological role, catalyzes the removal of a penultimate prolyl residue from the N-termini of peptides. This is Probable Xaa-Pro aminopeptidase P (AMPP) from Coprinopsis cinerea (strain Okayama-7 / 130 / ATCC MYA-4618 / FGSC 9003) (Inky cap fungus).